A 113-amino-acid chain; its full sequence is MRLISLLLFVLLLAIQYPLWLGKGGWLRVWELNHQVQEQATRNQMLKLRNAKLEGEVKDLQDGTGAIEERARYELGMVKDGEVFVQFVAPAPKVSATPPLPPPPNSPAATGRH.

At 1–3 the chain is on the cytoplasmic side; sequence MRL. A helical membrane pass occupies residues 4 to 21; sequence ISLLLFVLLLAIQYPLWL. The Periplasmic segment spans residues 22-113; it reads GKGGWLRVWE…PNSPAATGRH (92 aa). Residues 34–63 are a coiled coil; sequence HQVQEQATRNQMLKLRNAKLEGEVKDLQDG. A disordered region spans residues 93–113; the sequence is KVSATPPLPPPPNSPAATGRH.

Belongs to the FtsB family. As to quaternary structure, part of a complex composed of FtsB, FtsL and FtsQ.

The protein resides in the cell inner membrane. Functionally, essential cell division protein. May link together the upstream cell division proteins, which are predominantly cytoplasmic, with the downstream cell division proteins, which are predominantly periplasmic. This chain is Cell division protein FtsB, found in Cupriavidus pinatubonensis (strain JMP 134 / LMG 1197) (Cupriavidus necator (strain JMP 134)).